Reading from the N-terminus, the 313-residue chain is Biotin synthase (313 aa).

Residues 38-262 (REVQISTLLS…TMPHARVRLS (225 aa)) enclose the Radical SAM core domain. Residues Cys-53, Cys-57, and Cys-60 each contribute to the [4Fe-4S] cluster site. [2Fe-2S] cluster contacts are provided by Cys-97, Cys-128, Cys-188, and Arg-260.

The protein belongs to the radical SAM superfamily. Biotin synthase family. In terms of assembly, homodimer. Requires [4Fe-4S] cluster as cofactor. [2Fe-2S] cluster is required as a cofactor.

The enzyme catalyses (4R,5S)-dethiobiotin + (sulfur carrier)-SH + 2 reduced [2Fe-2S]-[ferredoxin] + 2 S-adenosyl-L-methionine = (sulfur carrier)-H + biotin + 2 5'-deoxyadenosine + 2 L-methionine + 2 oxidized [2Fe-2S]-[ferredoxin]. It functions in the pathway cofactor biosynthesis; biotin biosynthesis; biotin from 7,8-diaminononanoate: step 2/2. Its function is as follows. Catalyzes the conversion of dethiobiotin (DTB) to biotin by the insertion of a sulfur atom into dethiobiotin via a radical-based mechanism. The chain is Biotin synthase from Granulibacter bethesdensis (strain ATCC BAA-1260 / CGDNIH1).